The following is a 315-amino-acid chain: Transcription repressor OFP7 (315 aa).

A disordered region spans residues 113-183 (YETPRRKIYN…ELPRVTRRPR (71 aa)). Residues 130–145 (RRRLKKKEKSNSRRRG) show a composition bias toward basic residues. Residues 160–174 (LPSSTNLSPEYSSSE) are compositionally biased toward polar residues. Positions 230 to 289 (VVKKSEDPYEDFKGSMMEMIVEKKMFEVAELEQLLSCFLSLNAKRHHRAIVRAFSEIWVA) constitute an OVATE domain.

Expressed in roots, shoots, stems, flower buds and siliques.

Its subcellular location is the nucleus. In terms of biological role, transcriptional repressor that regulates multiple aspects of plant growth and development through the regulation of BEL1-LIKE (BLH) and KNOX TALE (KNAT) homeodomain transcription factors. The polypeptide is Transcription repressor OFP7 (OFP7) (Arabidopsis thaliana (Mouse-ear cress)).